Reading from the N-terminus, the 218-residue chain is Ribose-5-phosphate isomerase A (218 aa).

Residues Thr28–Thr31, Asp81–Asp84, and Lys94–Gly97 contribute to the substrate site. Catalysis depends on Glu103, which acts as the Proton acceptor. Lys121 serves as a coordination point for substrate.

It belongs to the ribose 5-phosphate isomerase family. As to quaternary structure, homodimer.

The enzyme catalyses aldehydo-D-ribose 5-phosphate = D-ribulose 5-phosphate. The protein operates within carbohydrate degradation; pentose phosphate pathway; D-ribose 5-phosphate from D-ribulose 5-phosphate (non-oxidative stage): step 1/1. Catalyzes the reversible conversion of ribose-5-phosphate to ribulose 5-phosphate. The sequence is that of Ribose-5-phosphate isomerase A from Vibrio parahaemolyticus serotype O3:K6 (strain RIMD 2210633).